We begin with the raw amino-acid sequence, 380 residues long: 4-hydroxy-tetrahydrodipicolinate synthase, chloroplastic (380 aa).

The disordered stretch occupies residues 1–44 (MISPTNLLPARKITPVSNGGAATASPSSPSVAARPRRLPSGLQS). The N-terminal 54 residues, 1-54 (MISPTNLLPARKITPVSNGGAATASPSSPSVAARPRRLPSGLQSVTGRGKVSLA), are a transit peptide targeting the chloroplast. Low complexity predominate over residues 21-33 (AATASPSSPSVAA). T123 is a pyruvate binding site. Y209 functions as the Proton donor/acceptor in the catalytic mechanism. K237 (schiff-base intermediate with substrate) is an active-site residue. I276 provides a ligand contact to pyruvate.

It belongs to the DapA family. In terms of assembly, tetramer of modified subunits derived from two genes in different combinations.

Its subcellular location is the plastid. It localises to the chloroplast. It carries out the reaction L-aspartate 4-semialdehyde + pyruvate = (2S,4S)-4-hydroxy-2,3,4,5-tetrahydrodipicolinate + H2O + H(+). It functions in the pathway amino-acid biosynthesis; L-lysine biosynthesis via DAP pathway; (S)-tetrahydrodipicolinate from L-aspartate: step 3/4. Its activity is regulated as follows. Sensitive to lysine inhibition. This inhibition increase in an allosteric manner with increasing concentration of the inhibitor. Catalyzes the condensation of (S)-aspartate-beta-semialdehyde [(S)-ASA] and pyruvate to 4-hydroxy-tetrahydrodipicolinate (HTPA). This is 4-hydroxy-tetrahydrodipicolinate synthase, chloroplastic from Zea mays (Maize).